Reading from the N-terminus, the 319-residue chain is Acetyl-coenzyme A carboxylase carboxyl transferase subunit alpha (319 aa).

One can recognise a CoA carboxyltransferase C-terminal domain in the interval 35–296; sequence NIDEEVHRLR…KAQLLADLAD (262 aa).

This sequence belongs to the AccA family. Acetyl-CoA carboxylase is a heterohexamer composed of biotin carboxyl carrier protein (AccB), biotin carboxylase (AccC) and two subunits each of ACCase subunit alpha (AccA) and ACCase subunit beta (AccD).

It localises to the cytoplasm. It catalyses the reaction N(6)-carboxybiotinyl-L-lysyl-[protein] + acetyl-CoA = N(6)-biotinyl-L-lysyl-[protein] + malonyl-CoA. It functions in the pathway lipid metabolism; malonyl-CoA biosynthesis; malonyl-CoA from acetyl-CoA: step 1/1. Its function is as follows. Component of the acetyl coenzyme A carboxylase (ACC) complex. First, biotin carboxylase catalyzes the carboxylation of biotin on its carrier protein (BCCP) and then the CO(2) group is transferred by the carboxyltransferase to acetyl-CoA to form malonyl-CoA. In Citrobacter koseri (strain ATCC BAA-895 / CDC 4225-83 / SGSC4696), this protein is Acetyl-coenzyme A carboxylase carboxyl transferase subunit alpha.